The following is a 335-amino-acid chain: Biotin synthase (335 aa).

The 224-residue stretch at 53 to 276 (VEIEGIVSVK…RTILRFAGGR (224 aa)) folds into the Radical SAM core domain. Residues Cys-66, Cys-70, and Cys-73 each coordinate [4Fe-4S] cluster. 4 residues coordinate [2Fe-2S] cluster: Cys-109, Cys-142, Cys-201, and Arg-271.

Belongs to the radical SAM superfamily. Biotin synthase family. In terms of assembly, homodimer. The cofactor is [4Fe-4S] cluster. [2Fe-2S] cluster serves as cofactor.

It carries out the reaction (4R,5S)-dethiobiotin + (sulfur carrier)-SH + 2 reduced [2Fe-2S]-[ferredoxin] + 2 S-adenosyl-L-methionine = (sulfur carrier)-H + biotin + 2 5'-deoxyadenosine + 2 L-methionine + 2 oxidized [2Fe-2S]-[ferredoxin]. It functions in the pathway cofactor biosynthesis; biotin biosynthesis; biotin from 7,8-diaminononanoate: step 2/2. Its function is as follows. Catalyzes the conversion of dethiobiotin (DTB) to biotin by the insertion of a sulfur atom into dethiobiotin via a radical-based mechanism. The sequence is that of Biotin synthase from Acidothermus cellulolyticus (strain ATCC 43068 / DSM 8971 / 11B).